The following is a 1182-amino-acid chain: NACHT, LRR and PYD domains-containing protein 1a (1182 aa).

Positions 1 to 23 are disordered; that stretch reads MEESQSKQESSTKVAQHEGQEDV. Residues 133–442 enclose the NACHT domain; sequence QLVIIEGAAG…EFFAAMSYIL (310 aa). 139 to 146 lines the ATP pocket; that stretch reads GAAGIGKS. 3 LRR repeats span residues 634–655, 691–711, and 720–743; these read NLEE…SLCT, SLTE…KMLC, and NLSI…RTLE. The tract at residues 780 to 806 is disordered; it reads QQRQQSGDKHMEPLGTEDEFWGPTGPV. Residues 799–932 are ZU5; the sequence is FWGPTGPVTT…HYAVLENPSF (134 aa). The region spanning 799–1082 is the FIIND domain; that stretch reads FWGPTGPVTT…LRPALPKIAT (284 aa). The tract at residues 933–1082 is UPA; that stretch reads SPMGILLRMI…LRPALPKIAT (150 aa). Residues 1092–1175 enclose the CARD domain; sequence HFMDQHREQL…HLVMDILEKL (84 aa).

Belongs to the NLRP family. As to quaternary structure, interacts (via LRR repeats) with BCL2 and BCL2L1 (via the loop between motifs BH4 and BH3). Interacts with NOD2; this interaction is enhanced in the presence of muramyl dipeptide (MDP) and increases IL1B release. Interacts with EIF2AK2/PKR; this interaction requires EIF2AK2 activity, is accompanied by EIF2AK2 autophosphorylation and promotes inflammasome assembly in response to danger-associated signals. Interacts with MEFV; this interaction targets Nlrp1a to degradation by autophagy, hence preventing excessive IL1B- and IL18-mediated inflammation. Interacts with DPP9; leading to inhibit activation of the inflammasome. DPP9 acts via formation of a ternary complex, composed of a DPP9 homodimer, one full-length Nlrp1a protein, and one cleaved C-terminus of Nlrp1a (NACHT, LRR and PYD domains-containing protein 1a, C-terminus). Interacts with DPP8; leading to inhibit activation of the inflammasome, probably via formation of a ternary complex with DPP8. Interacts with the C-terminal part of Nlrp1a (NACHT, LRR and PYD domains-containing protein 1a, C-terminus) in absence of pathogens and other damage-associated signals. In terms of assembly, interacts with the N-terminal part of Nlrp1a (NACHT, LRR and PYD domains-containing protein 1a, N-terminus) in absence of pathogens and other damage-associated signals. Homomultimer; forms the Nlrp1a inflammasome polymeric complex, a filament composed of homopolymers of this form in response to pathogens and other damage-associated signals. Interacts (via CARD domain) with CASP1 (via CARD domain); leading to CASP1 activation. In terms of processing, autocatalytically cleaved. Autocatalytic cleavage in FIIND region occurs constitutively, prior to activation signals, and is required for inflammasome activity (IL1B release), possibly by facilitating CASP1 binding. Both N- and C-terminal parts remain associated non-covalently. Ubiquitinated in response to pathogen-associated signals, leading to its degradation by the proteasome and subsequent release of the cleaved C-terminal part of the protein (NACHT, LRR and PYD domains-containing protein 1a, C-terminus), which polymerizes and forms the Nlrp1a inflammasome. In terms of tissue distribution, highly expressed in hematopoietic stem cells and progenitor cells of both myeloid and lymphoid origin. The expression is highly strain-dependent. Not expressed in Balb/cJ animals, but widely expressed in C57BL/6J. Expressed in macrophages resistant to Bacillus anthracis lethal toxin, but not in toxin-sensitive macrophages, except in CAST/EiJ strain.

The protein localises to the cytoplasm. The protein resides in the cytosol. It is found in the nucleus. It localises to the inflammasome. Nlrp1a inflammasome is activated by pathogens and other damage-associated signals: activation promotes ubiquitination and degradation of the N-terminal part, releasing the cleaved C-terminal part of the protein (NACHT, LRR and PYD domains-containing protein 1a, C-terminus), which polymerizes and forms the Nlrp1a inflammasome. Nlrp1a inflammasome is inhibited by DPP8 and DPP9, which sequester the C-terminal fragment of Nlrp1a (NACHT, LRR and PYD domains-containing protein 1a, C-terminus) in a ternary complex, thereby preventing Nlrp1a oligomerization and activation. Nlrp1a inflammasome is activated by Val-boroPro (Talabostat, PT-100), an inhibitor of dipeptidyl peptidases DPP8 and DPP9. Val-boroPro relieves inhibition of DPP8 and/or DPP9 by promoting disruption of the ternary complex, releasing its C-terminal part from autoinhibition. In terms of biological role, acts as the sensor component of the Nlrp1a inflammasome, which mediates inflammasome activation in response to various pathogen-associated signals, leading to subsequent pyroptosis. Inflammasomes are supramolecular complexes that assemble in the cytosol in response to pathogens and other damage-associated signals and play critical roles in innate immunity and inflammation. Acts as a recognition receptor (PRR): recognizes specific pathogens and other damage-associated signals, and mediates the formation of the inflammasome polymeric complex. In response to pathogen-associated signals, the N-terminal part of Nlrp1a is degraded by the proteasome, releasing the cleaved C-terminal part of the protein (NACHT, LRR and PYD domains-containing protein 1a, C-terminus), which polymerizes to initiate the formation of the inflammasome complex: the inflammasome recruits pro-caspase-1 (proCASP1) and promotes caspase-1 (CASP1) activation, which subsequently cleaves and activates inflammatory cytokines IL1B and IL18 and gasdermin-D (GSDMD), leading to pyroptosis. In the absence of GSDMD expression, the Nlrp1a inflammasome is able to recruit and activate CASP8, leading to activation of gasdermin-E (GSDME). Activation of Nlrp1a inflammasome is also required for HMGB1 secretion; the active cytokines and HMGB1 stimulate inflammatory responses. When activated in the bone marrow, induces the pyroptosis of hematopoietic stem cells and progenitor cells of both myeloid and lymphoid lineages, hence allowing the removal of damaged cells, and the release of IL1B, which induces granulopoiesis. Constitutes the precursor of the Nlrp1a inflammasome, which mediates autoproteolytic processing within the FIIND domain to generate the N-terminal and C-terminal parts, which are associated non-covalently in absence of pathogens and other damage-associated signals. Its function is as follows. Regulatory part that prevents formation of the Nlrp1a inflammasome: in absence of pathogens and other damage-associated signals, interacts with the C-terminal part of Nlrp1a (NACHT, LRR and PYD domains-containing protein 1a, C-terminus), preventing activation of the Nlrp1a inflammasome. In response to pathogen-associated signals, this part is ubiquitinated and degraded by the proteasome, releasing the cleaved C-terminal part of the protein, which polymerizes and forms the Nlrp1a inflammasome. Functionally, constitutes the active part of the Nlrp1a inflammasome. In absence of pathogens and other damage-associated signals, interacts with the N-terminal part of Nlrp1a (NACHT, LRR and PYD domains-containing protein 1a, N-terminus), preventing activation of the Nlrp1a inflammasome. In response to pathogen-associated signals, the N-terminal part of Nlrp1a is degraded by the proteasome, releasing this form, which polymerizes to form the Nlrp1a inflammasome complex: the Nlrp1a inflammasome complex then directly recruits pro-caspase-1 (proCASP1) and promotes caspase-1 (CASP1) activation, leading to gasdermin-D (GSDMD) cleavage and subsequent pyroptosis. This is NACHT, LRR and PYD domains-containing protein 1a from Mus musculus (Mouse).